The chain runs to 323 residues: Galactosylgalactosylxylosylprotein 3-beta-glucuronosyltransferase 2 (323 aa).

Residues Met-1 to Lys-2 are Cytoplasmic-facing. The chain crosses the membrane as a helical; Signal-anchor for type II membrane protein span at residues Ser-3–Leu-23. The Lumenal portion of the chain corresponds to Asp-24–Val-323. Residues Arg-51–Pro-80 form a disordered region. N-linked (GlcNAc...) asparagine glycosylation occurs at Asn-67. Residues Pro-87–Tyr-89, Asp-118, Arg-155, Arg-160, and Asp-185–Asp-187 each bind UDP-alpha-D-glucuronate. Residue Asp-187 coordinates Mn(2+). The interaction with galactose moiety of substrate glycoprotein stretch occupies residues Trp-234–Asp-243. Catalysis depends on Glu-273, which acts as the Proton donor/acceptor. An N-linked (GlcNAc...) asparagine glycan is attached at Asn-292. His-300 to Arg-302 is a binding site for UDP-alpha-D-glucuronate.

Belongs to the glycosyltransferase 43 family. In terms of assembly, homodimer. Requires Mn(2+) as cofactor. In terms of tissue distribution, expressed in the trachea, retina, spinal cord, hippocampus and other brain regions, and, at lower levels, in testis and ovary.

The protein resides in the golgi apparatus membrane. It carries out the reaction 3-O-(beta-D-galactosyl-(1-&gt;3)-beta-D-galactosyl-(1-&gt;4)-beta-D-xylosyl)-L-seryl-[protein] + UDP-alpha-D-glucuronate = 3-O-(beta-D-GlcA-(1-&gt;3)-beta-D-Gal-(1-&gt;3)-beta-D-Gal-(1-&gt;4)-beta-D-Xyl)-L-seryl-[protein] + UDP + H(+). It participates in protein modification; protein glycosylation. In terms of biological role, involved in the biosynthesis of L2/HNK-1 carbohydrate epitope on both glycolipids and glycoproteins. This chain is Galactosylgalactosylxylosylprotein 3-beta-glucuronosyltransferase 2 (B3GAT2), found in Homo sapiens (Human).